The primary structure comprises 91 residues: UPF0250 protein Pfl01_4965 (91 aa).

Belongs to the UPF0250 family.

The polypeptide is UPF0250 protein Pfl01_4965 (Pseudomonas fluorescens (strain Pf0-1)).